Reading from the N-terminus, the 500-residue chain is Glycerol kinase (500 aa).

Threonine 11 contacts ADP. ATP contacts are provided by threonine 11, threonine 12, and serine 13. Threonine 11 is a sn-glycerol 3-phosphate binding site. Position 15 (arginine 15) interacts with ADP. Arginine 81, glutamate 82, tyrosine 133, and aspartate 242 together coordinate sn-glycerol 3-phosphate. Residues arginine 81, glutamate 82, tyrosine 133, aspartate 242, and glutamine 243 each coordinate glycerol. 2 residues coordinate ADP: threonine 264 and glycine 307. Residues threonine 264, glycine 307, glutamine 311, and glycine 411 each contribute to the ATP site. Position 411 (glycine 411) interacts with ADP.

The protein belongs to the FGGY kinase family.

It carries out the reaction glycerol + ATP = sn-glycerol 3-phosphate + ADP + H(+). The protein operates within polyol metabolism; glycerol degradation via glycerol kinase pathway; sn-glycerol 3-phosphate from glycerol: step 1/1. Its activity is regulated as follows. Inhibited by fructose 1,6-bisphosphate (FBP). In terms of biological role, key enzyme in the regulation of glycerol uptake and metabolism. Catalyzes the phosphorylation of glycerol to yield sn-glycerol 3-phosphate. The sequence is that of Glycerol kinase from Rhodopseudomonas palustris (strain BisA53).